The following is a 689-amino-acid chain: Elongation factor G (689 aa).

Residues 8-282 (DKVRNIGIMA…AIVRYLPSPL (275 aa)) enclose the tr-type G domain. GTP-binding positions include 17 to 24 (AHIDAGKT), 81 to 85 (DTPGH), and 135 to 138 (NKMD).

This sequence belongs to the TRAFAC class translation factor GTPase superfamily. Classic translation factor GTPase family. EF-G/EF-2 subfamily.

It is found in the cytoplasm. Catalyzes the GTP-dependent ribosomal translocation step during translation elongation. During this step, the ribosome changes from the pre-translocational (PRE) to the post-translocational (POST) state as the newly formed A-site-bound peptidyl-tRNA and P-site-bound deacylated tRNA move to the P and E sites, respectively. Catalyzes the coordinated movement of the two tRNA molecules, the mRNA and conformational changes in the ribosome. This is Elongation factor G from Thermoanaerobacter pseudethanolicus (strain ATCC 33223 / 39E) (Clostridium thermohydrosulfuricum).